The primary structure comprises 598 residues: Peroxisomal targeting signal receptor (598 aa).

Disordered regions lie at residues 1–54 (MSFM…GEMS), 135–154 (RGGSPAEAMQQQGPGPMQGG), and 208–237 (AVGKGKEVEEQTAETATATETVTETETTTE). Positions 9–22 (ECSTGRNPLSQFTK) are enriched in polar residues. C10 participates in a covalent cross-link: Glycyl cysteine thioester (Cys-Gly) (interchain with G-Cter in ubiquitin). Residue K22 forms a Glycyl lysine isopeptide (Lys-Gly) (interchain with G-Cter in ubiquitin) linkage. A compositionally biased stretch (basic and acidic residues) spans 23-35 (HTAEDRSLQHDRV). The span at 220–233 (AETATATETVTETE) shows a compositional bias: low complexity. 7 TPR repeats span residues 304–337 (PDPFKIGVELMETGGRLSEAALAFEAAVQKNTEH), 338–371 (AEAWGRLGACQAQNEKEDPAIRALERCIKLEPGN), 372–409 (LSALMNLSVSYTNEGYENAAYATLERWLATKYPEVVDQ), 410–447 (ARNQEPRLGNEDKFQLHSRVTELFIRAAQLSPDGANID), 448–481 (ADVQVGLGVLFYGNEEYDKAIDCFNAAIAVRPDD), 482–515 (ALLWNRLGATLANSHRSEEAIDAYYKALELRPSF), and 516–549 (VRARYNLGVSCINIGCYKEAAQYLLGALSMHKVE).

Belongs to the peroxisomal targeting signal receptor family. Post-translationally, ubiquitination at Cys-10 is UBC4-independent but requires the presence of PEX4. Ubiquitination at Lys-22 is UBC4-dependent.

It localises to the cytoplasm. The protein resides in the peroxisome membrane. Its function is as follows. Binds to the C-terminal PTS1-type tripeptide peroxisomal targeting signal (SKL-type) and plays an essential role in peroxisomal protein import. In Yarrowia lipolytica (strain CLIB 122 / E 150) (Yeast), this protein is Peroxisomal targeting signal receptor (PAY32).